The following is a 279-amino-acid chain: Large ribosomal subunit protein uL2 (279 aa).

The interval Ala-224–Arg-279 is disordered. A compositionally biased stretch (basic residues) spans Val-269 to Arg-279.

Belongs to the universal ribosomal protein uL2 family. In terms of assembly, part of the 50S ribosomal subunit. Forms a bridge to the 30S subunit in the 70S ribosome.

In terms of biological role, one of the primary rRNA binding proteins. Required for association of the 30S and 50S subunits to form the 70S ribosome, for tRNA binding and peptide bond formation. It has been suggested to have peptidyltransferase activity; this is somewhat controversial. Makes several contacts with the 16S rRNA in the 70S ribosome. The chain is Large ribosomal subunit protein uL2 from Cereibacter sphaeroides (strain ATCC 17025 / ATH 2.4.3) (Rhodobacter sphaeroides).